Here is a 101-residue protein sequence, read N- to C-terminus: Small ribosomal subunit protein uS14 (101 aa).

Belongs to the universal ribosomal protein uS14 family. In terms of assembly, part of the 30S ribosomal subunit. Contacts proteins S3 and S10.

In terms of biological role, binds 16S rRNA, required for the assembly of 30S particles and may also be responsible for determining the conformation of the 16S rRNA at the A site. The sequence is that of Small ribosomal subunit protein uS14 from Paraburkholderia phymatum (strain DSM 17167 / CIP 108236 / LMG 21445 / STM815) (Burkholderia phymatum).